Reading from the N-terminus, the 513-residue chain is ATP synthase subunit alpha (513 aa).

169-176 (GDRQTGKT) provides a ligand contact to ATP.

It belongs to the ATPase alpha/beta chains family. In terms of assembly, F-type ATPases have 2 components, CF(1) - the catalytic core - and CF(0) - the membrane proton channel. CF(1) has five subunits: alpha(3), beta(3), gamma(1), delta(1), epsilon(1). CF(0) has three main subunits: a(1), b(2) and c(9-12). The alpha and beta chains form an alternating ring which encloses part of the gamma chain. CF(1) is attached to CF(0) by a central stalk formed by the gamma and epsilon chains, while a peripheral stalk is formed by the delta and b chains.

Its subcellular location is the cell inner membrane. It carries out the reaction ATP + H2O + 4 H(+)(in) = ADP + phosphate + 5 H(+)(out). Functionally, produces ATP from ADP in the presence of a proton gradient across the membrane. The alpha chain is a regulatory subunit. This chain is ATP synthase subunit alpha, found in Cupriavidus necator (strain ATCC 17699 / DSM 428 / KCTC 22496 / NCIMB 10442 / H16 / Stanier 337) (Ralstonia eutropha).